The following is a 331-amino-acid chain: Cathepsin 7 (331 aa).

The signal sequence occupies residues 1–17 (MTPTVFLSILCLGVALA). The propeptide at 18-111 (APAPDYNLDA…GKHIQKRNPK (94 aa)) is activation peptide. The short motif at 33-50 (KRSNDRTYSPEEEKQRRA) is the Nuclear localization signal element. Asn-72 carries N-linked (GlcNAc...) asparagine glycosylation. Cystine bridges form between Cys-133-Cys-176, Cys-167-Cys-209, and Cys-267-Cys-320. Cys-136 is an active-site residue. Active-site residues include His-274 and Asn-298.

It belongs to the peptidase C1 family. In terms of tissue distribution, expressed in placenta. Expressed in parietal and spiral artery-associated trophoblast giant cells, most abundantly during the phase of trophoblast invasion. From 14.5 dpc onwards, expressed at lower levels in labyrinth trophoblast cells. Expressed in trophoblast stem cells. Expressed in heart, liver and testis.

The protein localises to the endosome. It localises to the lysosome. Its subcellular location is the cytoplasm. It is found in the perinuclear region. The protein resides in the golgi apparatus. The protein localises to the nucleus. It localises to the secreted. Its subcellular location is the extracellular space. Involved in trophoblast cell proliferation and differentiation probably by affecting mitotic cell cycle progression. Proteolytic activity and nuclear localization are essential for its role in cell cycle progression. The chain is Cathepsin 7 from Mus musculus (Mouse).